Reading from the N-terminus, the 943-residue chain is Protein translocase subunit SecA (943 aa).

Residues Gln-90, 108–112, and Asp-509 contribute to the ATP site; that span reads GEGKT. The tract at residues 534-576 is disordered; that stretch reads KPDNEHKPPIPQQRSSKAGGGFASKSESISNKNSKSSGASLFP. Low complexity predominate over residues 556–570; it reads ASKSESISNKNSKSS.

It belongs to the SecA family. In terms of assembly, monomer and homodimer. Part of the essential Sec protein translocation apparatus which comprises SecA, SecYEG and auxiliary proteins SecDF. Other proteins may also be involved.

Its subcellular location is the cell inner membrane. It is found in the cellular thylakoid membrane. It localises to the cytoplasm. The enzyme catalyses ATP + H2O + cellular proteinSide 1 = ADP + phosphate + cellular proteinSide 2.. Part of the Sec protein translocase complex. Interacts with the SecYEG preprotein conducting channel. Has a central role in coupling the hydrolysis of ATP to the transfer of proteins into and across the cell membrane, serving as an ATP-driven molecular motor driving the stepwise translocation of polypeptide chains across the membrane. In terms of biological role, probably participates in protein translocation into and across both the cytoplasmic and thylakoid membranes in cyanobacterial cells. This is Protein translocase subunit SecA from Prochlorococcus marinus (strain MIT 9515).